Reading from the N-terminus, the 170-residue chain is Alpha-crystallin A chain (170 aa).

Residue M1 is modified to N-acetylmethionine. The segment at 1–63 (MDVTIQHPWF…RTVLDSGISE (63 aa)) is required for complex formation with BFSP1 and BFSP2. Residue Q6 is modified to Deamidated glutamine; partial. S45 carries the phosphoserine modification. A Deamidated glutamine; partial modification is found at Q50. A sHSP domain is found at 52 to 161 (LFRTVLDSGI…SERTIPVSRE (110 aa)). N6-acetyllysine occurs at positions 70 and 99. H100 provides a ligand contact to Zn(2+). N101 is modified (deamidated asparagine; partial). Zn(2+)-binding residues include E102, H107, and H151. Residues 144–170 (PKIVDPSHSERTIPVSREEKPSSAPSS) form a disordered region. A compositionally biased stretch (basic and acidic residues) spans 148 to 164 (DPSHSERTIPVSREEKP). S159 is a glycosylation site (O-linked (GlcNAc) serine).

The protein belongs to the small heat shock protein (HSP20) family. Heteromer composed of three CRYAA and one CRYAB subunits. Inter-subunit bridging via zinc ions enhances stability, which is crucial as there is no protein turn over in the lens. Can also form homodimers and homotetramers (dimers of dimers) which serve as the building blocks of homooligomers. Within homooligomers, the zinc-binding motif is created from residues of 3 different molecules. His-100 and Glu-102 from one molecule are ligands of the zinc ion, and His-107 and His-151 residues from additional molecules complete the site with tetrahedral coordination geometry. Part of a complex required for lens intermediate filament formation composed of BFSP1, BFSP2 and CRYAA. In terms of processing, acetylation at Lys-70 may increase chaperone activity. Post-translationally, undergoes age-dependent proteolytical cleavage at the C-terminus.

The protein localises to the cytoplasm. The protein resides in the nucleus. Its function is as follows. Contributes to the transparency and refractive index of the lens. Acts as a chaperone, preventing aggregation of various proteins under a wide range of stress conditions. Required for the correct formation of lens intermediate filaments as part of a complex composed of BFSP1, BFSP2 and CRYAA. This Choloepus hoffmanni (Hoffmann's two-fingered sloth) protein is Alpha-crystallin A chain (CRYAA).